Consider the following 396-residue polypeptide: 1-deoxy-D-xylulose 5-phosphate reductoisomerase (396 aa).

NADPH is bound by residues Thr13, Gly14, Ser15, Ile16, and Asn127. Lys128 contributes to the 1-deoxy-D-xylulose 5-phosphate binding site. Position 129 (Glu129) interacts with NADPH. Asp153 is a Mn(2+) binding site. Residues Ser154, Glu155, Ser184, and His207 each contribute to the 1-deoxy-D-xylulose 5-phosphate site. Glu155 is a Mn(2+) binding site. NADPH is bound at residue Gly213. Residues Ser220, Asn225, Lys226, and Glu229 each coordinate 1-deoxy-D-xylulose 5-phosphate. Glu229 serves as a coordination point for Mn(2+).

The protein belongs to the DXR family. The cofactor is Mg(2+). Mn(2+) is required as a cofactor.

It carries out the reaction 2-C-methyl-D-erythritol 4-phosphate + NADP(+) = 1-deoxy-D-xylulose 5-phosphate + NADPH + H(+). It functions in the pathway isoprenoid biosynthesis; isopentenyl diphosphate biosynthesis via DXP pathway; isopentenyl diphosphate from 1-deoxy-D-xylulose 5-phosphate: step 1/6. Functionally, catalyzes the NADPH-dependent rearrangement and reduction of 1-deoxy-D-xylulose-5-phosphate (DXP) to 2-C-methyl-D-erythritol 4-phosphate (MEP). The polypeptide is 1-deoxy-D-xylulose 5-phosphate reductoisomerase (Pseudomonas savastanoi pv. phaseolicola (strain 1448A / Race 6) (Pseudomonas syringae pv. phaseolicola (strain 1448A / Race 6))).